The following is a 470-amino-acid chain: Growth/differentiation factor 6 (470 aa).

Positions 1 to 22 (MDTSRVLLSAVFLISFLWDLPG) are cleaved as a signal peptide. A propeptide spanning residues 23–350 (FQQASISSSS…SPSPGRRRRR (328 aa)) is cleaved from the precursor. Residues 28–98 (ISSSSSSAEL…REPPGRGPRV (71 aa)) are disordered. The span at 45–80 (SRKEGRMPRAPRENATAREPLDRQEPPPRPQEEPQR) shows a compositional bias: basic and acidic residues. Asparagine 120 carries an N-linked (GlcNAc...) asparagine glycan. Disordered stretches follow at residues 247 to 272 (PGAA…SLGF) and 308 to 366 (TEVV…KKSR). The span at 321–333 (GPPPPPPPPPPSG) shows a compositional bias: pro residues. A compositionally biased stretch (basic residues) spans 345-366 (GRRRRRTAFASRHGKRHGKKSR). 3 disulfide bridges follow: cysteine 369–cysteine 435, cysteine 398–cysteine 467, and cysteine 402–cysteine 469.

The protein belongs to the TGF-beta family. In terms of assembly, homodimer; disulfide-linked.

The protein localises to the secreted. Functionally, growth factor that controls proliferation and cellular differentiation in the retina and bone formation. Plays a key role in regulating apoptosis during retinal development. Establishes dorsal-ventral positional information in the retina and controls the formation of the retinotectal map. Required for normal formation of bones and joints in the limbs, skull, digits and axial skeleton. Plays a key role in establishing boundaries between skeletal elements during development. Regulation of GDF6 expression seems to be a mechanism for evolving species-specific changes in skeletal structures. Seems to positively regulate differentiation of chondrogenic tissue through the growth factor receptors subunits BMPR1A, BMPR1B, BMPR2 and ACVR2A, leading to the activation of SMAD1-SMAD5-SMAD8 complex. The regulation of chondrogenic differentiation is inhibited by NOG. Also involved in the induction of adipogenesis from mesenchymal stem cells. This mechanism acts through the growth factor receptors subunits BMPR1A, BMPR2 and ACVR2A and the activation of SMAD1-SMAD5-SMAD8 complex and MAPK14/p38. This Bos taurus (Bovine) protein is Growth/differentiation factor 6 (GDF6).